An 892-amino-acid chain; its full sequence is Putative GTP diphosphokinase RSH1, chloroplastic (892 aa).

The N-terminal 52 residues, 1-52, are a transit peptide targeting the chloroplast; the sequence is MQPPTGAVSGSSSSSLECVSSCRTSWRGGGRPYECSVLSCAWNAPRALTGAL. Positions 184–291 constitute an HD domain; the sequence is FIIHPVEVAR…VKLADRLHNM (108 aa). One can recognise a TGS domain in the interval 574-637; it reads LGSRVFVFTP…ANAEVVEIII (64 aa). An ACT domain is found at 809-880; sequence WLCIVCVDRK…MILGVLGWSV (72 aa).

The protein belongs to the RelA/SpoT family.

The protein resides in the plastid. The protein localises to the chloroplast. It carries out the reaction GTP + ATP = guanosine 3'-diphosphate 5'-triphosphate + AMP. May be involved in a rapid plant ppGpp (guanosine 3'-diphosphate 5'-diphosphate)-mediated response to pathogens and other stresses. The chain is Putative GTP diphosphokinase RSH1, chloroplastic (RSH1) from Oryza sativa subsp. japonica (Rice).